The following is a 559-amino-acid chain: Dihydroxy-acid dehydratase (559 aa).

Asp-81 contacts Mg(2+). Cys-122 is a [2Fe-2S] cluster binding site. Mg(2+) is bound by residues Asp-123 and Lys-124. N6-carboxylysine is present on Lys-124. Cys-195 is a [2Fe-2S] cluster binding site. Position 448 (Glu-448) interacts with Mg(2+). Ser-474 functions as the Proton acceptor in the catalytic mechanism.

This sequence belongs to the IlvD/Edd family. As to quaternary structure, homodimer. The cofactor is [2Fe-2S] cluster. Requires Mg(2+) as cofactor.

The enzyme catalyses (2R)-2,3-dihydroxy-3-methylbutanoate = 3-methyl-2-oxobutanoate + H2O. The catalysed reaction is (2R,3R)-2,3-dihydroxy-3-methylpentanoate = (S)-3-methyl-2-oxopentanoate + H2O. It participates in amino-acid biosynthesis; L-isoleucine biosynthesis; L-isoleucine from 2-oxobutanoate: step 3/4. The protein operates within amino-acid biosynthesis; L-valine biosynthesis; L-valine from pyruvate: step 3/4. Functions in the biosynthesis of branched-chain amino acids. Catalyzes the dehydration of (2R,3R)-2,3-dihydroxy-3-methylpentanoate (2,3-dihydroxy-3-methylvalerate) into 2-oxo-3-methylpentanoate (2-oxo-3-methylvalerate) and of (2R)-2,3-dihydroxy-3-methylbutanoate (2,3-dihydroxyisovalerate) into 2-oxo-3-methylbutanoate (2-oxoisovalerate), the penultimate precursor to L-isoleucine and L-valine, respectively. The polypeptide is Dihydroxy-acid dehydratase (Geobacillus kaustophilus (strain HTA426)).